The primary structure comprises 247 residues: Small ribosomal subunit protein uS3 (247 aa).

Residues 39–109 (IRSMIRSFPE…KVQIKVKEIK (71 aa)) enclose the KH type-2 domain. The disordered stretch occupies residues 224-247 (RSRRESGQKSDELVRDERTHAERG). Residues 227–247 (RESGQKSDELVRDERTHAERG) are compositionally biased toward basic and acidic residues.

It belongs to the universal ribosomal protein uS3 family. In terms of assembly, part of the 30S ribosomal subunit. Forms a tight complex with proteins S10 and S14.

In terms of biological role, binds the lower part of the 30S subunit head. Binds mRNA in the 70S ribosome, positioning it for translation. In Treponema pallidum (strain Nichols), this protein is Small ribosomal subunit protein uS3.